The primary structure comprises 426 residues: UPF0597 protein CLD_2825 (426 aa).

It belongs to the UPF0597 family.

The polypeptide is UPF0597 protein CLD_2825 (Clostridium botulinum (strain Okra / Type B1)).